A 1014-amino-acid chain; its full sequence is DNA translocase FtsK 2 (1014 aa).

Residues 1–21 (MFWIVLIVILLLALAGLFFVR) traverse the membrane as a helical segment. Disordered regions lie at residues 89–142 (ESEP…EDIA), 283–318 (RHAG…RRRV), and 487–525 (SQAV…AVSE). Acidic residues predominate over residues 121 to 140 (EEAETEEAEAAEEEAADTED). The span at 298–307 (DVSQGQSVSD) shows a compositional bias: polar residues. Residues 662 to 871 (GQPVVTDLGK…FQVSSKIDSR (210 aa)) enclose the FtsK domain. 682–687 (GSGKSV) is a binding site for ATP.

This sequence belongs to the FtsK/SpoIIIE/SftA family. Homohexamer. Forms a ring that surrounds DNA.

It is found in the cell inner membrane. Its function is as follows. Essential cell division protein that coordinates cell division and chromosome segregation. The N-terminus is involved in assembly of the cell-division machinery. The C-terminus functions as a DNA motor that moves dsDNA in an ATP-dependent manner towards the dif recombination site, which is located within the replication terminus region. Translocation stops specifically at Xer-dif sites, where FtsK interacts with the Xer recombinase, allowing activation of chromosome unlinking by recombination. FtsK orienting polar sequences (KOPS) guide the direction of DNA translocation. FtsK can remove proteins from DNA as it translocates, but translocation stops specifically at XerCD-dif site, thereby preventing removal of XerC and XerD from dif. The chain is DNA translocase FtsK 2 (ftsK2) from Neisseria meningitidis serogroup A / serotype 4A (strain DSM 15465 / Z2491).